A 295-amino-acid polypeptide reads, in one-letter code: Phosphonoacetaldehyde hydrolase (295 aa).

The Nucleophile role is filled by aspartate 36. Mg(2+) is bound by residues aspartate 36 and alanine 38. The active-site Schiff-base intermediate with substrate is the lysine 78. Residue aspartate 212 coordinates Mg(2+).

This sequence belongs to the HAD-like hydrolase superfamily. PhnX family. Homodimer. It depends on Mg(2+) as a cofactor.

It carries out the reaction phosphonoacetaldehyde + H2O = acetaldehyde + phosphate + H(+). Its function is as follows. Involved in phosphonate degradation. The chain is Phosphonoacetaldehyde hydrolase from Psychromonas ingrahamii (strain DSM 17664 / CCUG 51855 / 37).